A 64-amino-acid chain; its full sequence is Large ribosomal subunit protein bL33 (64 aa).

It belongs to the bacterial ribosomal protein bL33 family.

This chain is Large ribosomal subunit protein bL33, found in Microcystis aeruginosa (strain NIES-843 / IAM M-2473).